Reading from the N-terminus, the 518-residue chain is UDP-N-acetylmuramate--L-alanine ligase (518 aa).

158-164 provides a ligand contact to ATP; sequence GTHGKTT.

It belongs to the MurCDEF family.

Its subcellular location is the cytoplasm. The enzyme catalyses UDP-N-acetyl-alpha-D-muramate + L-alanine + ATP = UDP-N-acetyl-alpha-D-muramoyl-L-alanine + ADP + phosphate + H(+). The protein operates within cell wall biogenesis; peptidoglycan biosynthesis. In terms of biological role, cell wall formation. This Crocosphaera subtropica (strain ATCC 51142 / BH68) (Cyanothece sp. (strain ATCC 51142)) protein is UDP-N-acetylmuramate--L-alanine ligase.